We begin with the raw amino-acid sequence, 317 residues long: Protease HtpX homolog (317 aa).

Helical transmembrane passes span 6 to 26 (TAIL…AIGG) and 28 to 48 (GGMM…YWNS). His130 is a Zn(2+) binding site. Glu131 is an active-site residue. His134 is a Zn(2+) binding site. 2 consecutive transmembrane segments (helical) span residues 145 to 165 (MTAT…LFGG) and 173 to 193 (PFGA…AMLV). Glu202 serves as a coordination point for Zn(2+). A disordered region spans residues 283–317 (GGGGFAPGPAPAVRPPGGNPWGVDPGGGQRRGPWG). Residues 290–300 (GPAPAVRPPGG) show a composition bias toward pro residues. Residues 306–317 (DPGGGQRRGPWG) are compositionally biased toward gly residues.

The protein belongs to the peptidase M48B family. Requires Zn(2+) as cofactor.

Its subcellular location is the cell inner membrane. In Xanthobacter autotrophicus (strain ATCC BAA-1158 / Py2), this protein is Protease HtpX homolog.